A 277-amino-acid chain; its full sequence is Transcription factor HES-4-B (277 aa).

The tract at residues 1-44 (MPADSMEKPTASPIAGAPANSAQTPDKPKSASEHRKSSKPIMEK) is disordered. The span at 26–35 (DKPKSASEHR) shows a compositional bias: basic and acidic residues. Residues 34-91 (HRKSSKPIMEKRRRARINESLGQLKTLILDALKKDSSRHSKLEKADILEMTVKHLRNL) enclose the bHLH domain. In terms of domain architecture, Orange spans 110 to 143 (YRAGFNECMNEVTRFLSTCEGVNTEVRTRLLGHL). The interval 258–277 (VSPLGGSTRADSAESVWRPW) is disordered. Positions 274–277 (WRPW) match the WRPW motif motif.

As to quaternary structure, transcription repression requires formation of a complex with a corepressor protein of the Groucho/TLE family. Interacts with the bHLH protein hes6; this interaction may inhibit the transcriptional repressor activity. Binds DNA in the form of a heterodimer with the bHLH protein hey1/hrt1. Interacts (via Orange domain) with id3 (via HLH domain). Dynamically expressed in the borders of several tissue territories. Expressed in the pre-placodal ectoderm (PPE) from gastrula stage. During gastrulation, expressed in the deep layer of the dorsal lip, the Spemann organizer and three distinct regions in the prospective neuroectoderm: neural plate border, presumptive floor plate/notoplate and anterior neural plate. At later stages, expression is localized to the anterior of the prechordal plate, the presomitic mesoderm, neural tube, neural crest derivatives and several tissues of the central nervous system, with expression in the developing floor plate continues to at least the tadpole stage. From the early tailbud stage, expressed in the dorsoanterior region of the developing pronephros. During early tailbud stages, broadly expressed within the pronephric mesoderm. and in the sensorial layer of the ectoderm covering the pronephros anlagen. During late tailbud to early tadpole stages, expressed in the ventral region of the pronephros. Expression remains in the proximal and distal tubules at late tadpole stages (stage 35).

The protein resides in the nucleus. Its function is as follows. Transcriptional repressor. Binds DNA on N-box motifs: 5'-CACNAG-3'. Promotes floor plate development and prechordal plate development. Required for lens development as early as the stage of lens field formation, partly through regulation of gene expression of the cell cycle inhibitor cdknx/p27(xic1). Required for formation of the neural crest downstream of multiple signaling pathways, and acts at the neural plate border via both DNA-binding dependent and independent mechanisms; acts in a DNA-binding dependent manner to repress pro-apoptotic and neural crest differentiation genes, including id3, delta1, and cdknx/p27(xic1), and thus promote the cell survival of neural plate border cells and maintain them in an undifferentiated state. Represses transcription of id3, at least in part through the repression of bmp4. On the other hand, acts in a DNA-independent manner separate from the transcriptional repressor function, to stimulate cell proliferation and promote neural crest formation. Via this DNA-independent route, acts in neurulae upstream of stat3 to transiently up-regulate the notch ligand dll1/delta1, which in turn up-regulates id3 expression. Then interacts directly with id3, which blocks the transcriptional repressor function of hes4-B/hairy2b to allow the progression of neural crest progenitors through specification and differentiation. Also acts via repressor-dependent and repressor-independent mechanisms in early gastrulae to establish the prospective anterior prechordal mesoderm identity in the Spemann organizer; induces specific genes independently from direct transcriptional regulation, and represses the genes specific for neighboring tissues through direct transcriptional repression. Modulates lateral inhibition during notch signaling and regulates the cell context dependent effects of notch (which can have inhibitory, permissive or enhancing roles in muscle or neural differentiation). Inhibits myogenesis. This is Transcription factor HES-4-B (hes4-b) from Xenopus laevis (African clawed frog).